We begin with the raw amino-acid sequence, 425 residues long: tRNA(Ile)-lysidine synthase (425 aa).

27–32 (SGGLDS) provides a ligand contact to ATP.

It belongs to the tRNA(Ile)-lysidine synthase family.

It is found in the cytoplasm. It catalyses the reaction cytidine(34) in tRNA(Ile2) + L-lysine + ATP = lysidine(34) in tRNA(Ile2) + AMP + diphosphate + H(+). In terms of biological role, ligates lysine onto the cytidine present at position 34 of the AUA codon-specific tRNA(Ile) that contains the anticodon CAU, in an ATP-dependent manner. Cytidine is converted to lysidine, thus changing the amino acid specificity of the tRNA from methionine to isoleucine. This chain is tRNA(Ile)-lysidine synthase, found in Streptococcus gordonii (strain Challis / ATCC 35105 / BCRC 15272 / CH1 / DL1 / V288).